A 251-amino-acid polypeptide reads, in one-letter code: Triosephosphate isomerase (251 aa).

10–12 (NWK) provides a ligand contact to substrate. H95 functions as the Electrophile in the catalytic mechanism. Residue E167 is the Proton acceptor of the active site. Residues G173, S213, and 234-235 (GG) contribute to the substrate site.

This sequence belongs to the triosephosphate isomerase family. As to quaternary structure, homodimer.

Its subcellular location is the cytoplasm. It carries out the reaction D-glyceraldehyde 3-phosphate = dihydroxyacetone phosphate. Its pathway is carbohydrate biosynthesis; gluconeogenesis. It participates in carbohydrate degradation; glycolysis; D-glyceraldehyde 3-phosphate from glycerone phosphate: step 1/1. In terms of biological role, involved in the gluconeogenesis. Catalyzes stereospecifically the conversion of dihydroxyacetone phosphate (DHAP) to D-glyceraldehyde-3-phosphate (G3P). This Acetivibrio thermocellus (strain ATCC 27405 / DSM 1237 / JCM 9322 / NBRC 103400 / NCIMB 10682 / NRRL B-4536 / VPI 7372) (Clostridium thermocellum) protein is Triosephosphate isomerase.